Here is a 424-residue protein sequence, read N- to C-terminus: UDP-N-acetylglucosamine 1-carboxyvinyltransferase (424 aa).

22 to 23 (KN) is a binding site for phosphoenolpyruvate. Arg-96 provides a ligand contact to UDP-N-acetyl-alpha-D-glucosamine. Cys-120 functions as the Proton donor in the catalytic mechanism. Cys-120 carries the post-translational modification 2-(S-cysteinyl)pyruvic acid O-phosphothioketal. UDP-N-acetyl-alpha-D-glucosamine-binding positions include 125–129 (RPVDQ), Asp-312, and Ile-334.

It belongs to the EPSP synthase family. MurA subfamily.

It localises to the cytoplasm. The enzyme catalyses phosphoenolpyruvate + UDP-N-acetyl-alpha-D-glucosamine = UDP-N-acetyl-3-O-(1-carboxyvinyl)-alpha-D-glucosamine + phosphate. Its pathway is cell wall biogenesis; peptidoglycan biosynthesis. Its function is as follows. Cell wall formation. Adds enolpyruvyl to UDP-N-acetylglucosamine. In Polynucleobacter asymbioticus (strain DSM 18221 / CIP 109841 / QLW-P1DMWA-1) (Polynucleobacter necessarius subsp. asymbioticus), this protein is UDP-N-acetylglucosamine 1-carboxyvinyltransferase.